Reading from the N-terminus, the 87-residue chain is uncharacterized protein (87 aa).

This is an uncharacterized protein from Bacillus phage phi105 (Bacteriophage phi-105).